Here is an 858-residue protein sequence, read N- to C-terminus: Heat shock protein 105 kDa (858 aa).

N-acetylserine is present on S2. The residue at position 471 (K471) is an N6-acetyllysine. Disordered regions lie at residues 500–585 (KVPT…PPEA) and 801–858 (VTQP…MDLD). Acidic residues predominate over residues 504–515 (EEEDGSSLEADM). Phosphoserine is present on residues S509 and S510. A compositionally biased stretch (polar residues) spans 533 to 549 (QQDNSEAGTQPQVQTDG). At S558 the chain carries Phosphoserine. Phosphothreonine is present on T562. Composition is skewed to basic and acidic residues over residues 564–585 (EESKTPDADKANEKKVDQPPEA) and 806–815 (PKIESPKLER). Phosphoserine is present on S810. T816 is subject to Phosphothreonine.

The protein belongs to the heat shock protein 70 family. As to quaternary structure, interacts with HSPA8/HSC70. Interacts with HSPA1A (via NBD) and HSPA1B (via NBD). Phosphorylation on Ser-509 may be important for regulation of the HSPA8/HSC70 chaperone activity. As to expression, expressed in neurons in the cerebrum and Purkinje cells in the cerebellum (at protein level). Expressed in testis and no expression or only low-level expression in liver, spleen, lung, and kidney (at protein level). Highly expressed in the brain and moderately expressed in lung, heart, thymus, spleen, liver, and small intestine.

The protein localises to the cytoplasm. Its subcellular location is the nucleus. Functionally, acts as a nucleotide-exchange factor (NEF) for chaperone proteins HSPA1A and HSPA1B, promoting the release of ADP from HSPA1A/B thereby triggering client/substrate protein release. Prevents the aggregation of denatured proteins in cells under severe stress, on which the ATP levels decrease markedly. Inhibits HSPA8/HSC70 ATPase and chaperone activities. This Mus musculus (Mouse) protein is Heat shock protein 105 kDa (Hsph1).